Here is a 29-residue protein sequence, read N- to C-terminus: Brevinin-2Ee (29 aa).

C23 and C29 form a disulfide bridge.

It belongs to the frog skin active peptide (FSAP) family. Brevinin subfamily. Expressed by the skin glands.

The protein localises to the secreted. Its function is as follows. Shows antibacterial activity against representative Gram-negative and Gram-positive bacterial species, and hemolytic activity. The polypeptide is Brevinin-2Ee (Pelophylax lessonae (Pool frog)).